Reading from the N-terminus, the 189-residue chain is Adenylate kinase (189 aa).

Residue 11 to 16 (GSGKGT) coordinates ATP. The NMP stretch occupies residues 31 to 60 (STGDVLRAEIKKGTELGKTAKGYIDQGQLL). Residues Thr-32, Arg-37, 58–60 (QLL), 86–89 (GFPR), and Gln-93 each bind AMP. Residues 127–137 (KRGQESGRADD) form an LID region. Arg-128 lines the ATP pocket. Positions 134 and 145 each coordinate AMP. Gly-173 contributes to the ATP binding site.

It belongs to the adenylate kinase family. Monomer.

Its subcellular location is the cytoplasm. It carries out the reaction AMP + ATP = 2 ADP. The protein operates within purine metabolism; AMP biosynthesis via salvage pathway; AMP from ADP: step 1/1. Catalyzes the reversible transfer of the terminal phosphate group between ATP and AMP. Plays an important role in cellular energy homeostasis and in adenine nucleotide metabolism. The chain is Adenylate kinase from Phocaeicola vulgatus (strain ATCC 8482 / DSM 1447 / JCM 5826 / CCUG 4940 / NBRC 14291 / NCTC 11154) (Bacteroides vulgatus).